Reading from the N-terminus, the 210-residue chain is Thiamine-phosphate synthase (210 aa).

Residues glutamine 36–lysine 40 and asparagine 68 contribute to the 4-amino-2-methyl-5-(diphosphooxymethyl)pyrimidine site. Mg(2+) contacts are provided by aspartate 69 and aspartate 88. Serine 107 serves as a coordination point for 4-amino-2-methyl-5-(diphosphooxymethyl)pyrimidine. Threonine 133–serine 135 provides a ligand contact to 2-[(2R,5Z)-2-carboxy-4-methylthiazol-5(2H)-ylidene]ethyl phosphate. Lysine 136 is a 4-amino-2-methyl-5-(diphosphooxymethyl)pyrimidine binding site. 2-[(2R,5Z)-2-carboxy-4-methylthiazol-5(2H)-ylidene]ethyl phosphate-binding positions include glycine 164 and isoleucine 184–serine 185.

It belongs to the thiamine-phosphate synthase family. Mg(2+) is required as a cofactor.

The catalysed reaction is 2-[(2R,5Z)-2-carboxy-4-methylthiazol-5(2H)-ylidene]ethyl phosphate + 4-amino-2-methyl-5-(diphosphooxymethyl)pyrimidine + 2 H(+) = thiamine phosphate + CO2 + diphosphate. It catalyses the reaction 2-(2-carboxy-4-methylthiazol-5-yl)ethyl phosphate + 4-amino-2-methyl-5-(diphosphooxymethyl)pyrimidine + 2 H(+) = thiamine phosphate + CO2 + diphosphate. It carries out the reaction 4-methyl-5-(2-phosphooxyethyl)-thiazole + 4-amino-2-methyl-5-(diphosphooxymethyl)pyrimidine + H(+) = thiamine phosphate + diphosphate. It functions in the pathway cofactor biosynthesis; thiamine diphosphate biosynthesis; thiamine phosphate from 4-amino-2-methyl-5-diphosphomethylpyrimidine and 4-methyl-5-(2-phosphoethyl)-thiazole: step 1/1. In terms of biological role, condenses 4-methyl-5-(beta-hydroxyethyl)thiazole monophosphate (THZ-P) and 2-methyl-4-amino-5-hydroxymethyl pyrimidine pyrophosphate (HMP-PP) to form thiamine monophosphate (TMP). The sequence is that of Thiamine-phosphate synthase from Moorella thermoacetica (strain ATCC 39073 / JCM 9320).